The sequence spans 313 residues: tRNA uridine(34) hydroxylase (313 aa).

The 95-residue stretch at 124-218 (SDPEVLLIDT…YLEEVPQQES (95 aa)) folds into the Rhodanese domain. The active-site Cysteine persulfide intermediate is Cys178.

It belongs to the TrhO family.

The enzyme catalyses uridine(34) in tRNA + AH2 + O2 = 5-hydroxyuridine(34) in tRNA + A + H2O. In terms of biological role, catalyzes oxygen-dependent 5-hydroxyuridine (ho5U) modification at position 34 in tRNAs. The chain is tRNA uridine(34) hydroxylase from Pseudomonas fluorescens (strain ATCC BAA-477 / NRRL B-23932 / Pf-5).